The following is a 244-amino-acid chain: MTVDWWTIGLQVINVSVLIWLLSRFFWRPICAVISRRQQEIAAQLAQVTDGQKQLEADRAAVKEARSSFEQERARIVQQAQQEAQSERQAILAKAQQDAAALEAGAKQSIAQEEAENQARWRSDAAALSCDIAGQLLAQTGCCRPARETLFDRLLKAIATLPDRERLSLRDGFTFATATAPSPDERQAYESALMTAVGEHPVITWAVDPALVEGFAVKTPYLTVASNWQADLVRIREGLSHAGH.

A helical membrane pass occupies residues 2 to 22 (TVDWWTIGLQVINVSVLIWLL).

Belongs to the ATPase B chain family. In terms of assembly, F-type ATPases have 2 components, F(1) - the catalytic core - and F(0) - the membrane proton channel. F(1) has five subunits: alpha(3), beta(3), gamma(1), delta(1), epsilon(1). F(0) has three main subunits: a(1), b(2) and c(10-14). The alpha and beta chains form an alternating ring which encloses part of the gamma chain. F(1) is attached to F(0) by a central stalk formed by the gamma and epsilon chains, while a peripheral stalk is formed by the delta and b chains.

It localises to the cell inner membrane. Its function is as follows. F(1)F(0) ATP synthase produces ATP from ADP in the presence of a proton or sodium gradient. F-type ATPases consist of two structural domains, F(1) containing the extramembraneous catalytic core and F(0) containing the membrane proton channel, linked together by a central stalk and a peripheral stalk. During catalysis, ATP synthesis in the catalytic domain of F(1) is coupled via a rotary mechanism of the central stalk subunits to proton translocation. Functionally, component of the F(0) channel, it forms part of the peripheral stalk, linking F(1) to F(0). The sequence is that of ATP synthase subunit b 2 from Gluconobacter oxydans (strain 621H) (Gluconobacter suboxydans).